A 338-amino-acid chain; its full sequence is Phenylalanine--tRNA ligase alpha subunit (338 aa).

Mg(2+) is bound at residue Glu252.

This sequence belongs to the class-II aminoacyl-tRNA synthetase family. Phe-tRNA synthetase alpha subunit type 1 subfamily. Tetramer of two alpha and two beta subunits. The cofactor is Mg(2+).

Its subcellular location is the cytoplasm. The enzyme catalyses tRNA(Phe) + L-phenylalanine + ATP = L-phenylalanyl-tRNA(Phe) + AMP + diphosphate + H(+). This chain is Phenylalanine--tRNA ligase alpha subunit (pheS), found in Aquifex aeolicus (strain VF5).